Reading from the N-terminus, the 189-residue chain is Interferon alpha-7 (189 aa).

The signal sequence occupies residues 1 to 23; it reads MARSFSLLMVVLVLSYKSICSLG. Cystine bridges form between Cys24/Cys122 and Cys52/Cys162.

This sequence belongs to the alpha/beta interferon family.

The protein resides in the secreted. Produced by macrophages, IFN-alpha have antiviral activities. Interferon stimulates the production of two enzymes: a protein kinase and an oligoadenylate synthetase. In Homo sapiens (Human), this protein is Interferon alpha-7 (IFNA7).